We begin with the raw amino-acid sequence, 1072 residues long: Zinc finger MIZ domain-containing protein 1 (1072 aa).

Positions 1 to 120 (MNSMDRHIQQ…HQKSRQNDPP (120 aa)) are sufficient for transactivation activity; sufficient for interaction with NOTCH1. A Glycyl lysine isopeptide (Lys-Gly) (interchain with G-Cter in SUMO2) cross-link involves residue Lys-91. Disordered regions lie at residues 112–141 (QKSR…TLSH) and 362–538 (TPSG…PYLS). Low complexity predominate over residues 128–141 (PLSSMSSMKPTLSH). The span at 419–436 (YGNQQYGPNSQFPTQPGQ) shows a compositional bias: polar residues. The segment covering 437 to 446 (YPTPNPPRPL) has biased composition (pro residues). Over residues 489-501 (SSGSSYSSYSQGS) the composition is skewed to low complexity. The segment covering 517–528 (SPVPGNPTPPMT) has biased composition (pro residues). Residues 734–815 (GEDGVEQTAI…MWGILNAIQH (82 aa)) form an SP-RING-type zinc finger. The Zn(2+) site is built by Cys-765, His-767, Cys-788, and Cys-791. Residues Lys-841 and Lys-850 each participate in a glycyl lysine isopeptide (Lys-Gly) (interchain with G-Cter in SUMO2) cross-link. The transactivation domain stretch occupies residues 844–1072 (PDGIPSKRFK…DDLLSLFENN (229 aa)). The segment covering 875–886 (GPSPYPLPPPPG) has biased composition (pro residues). Residues 875-1072 (GPSPYPLPPP…DDLLSLFENN (198 aa)) are disordered. 2 stretches are compositionally biased toward polar residues: residues 888–902 (TSSN…NYQG) and 958–968 (SSDQPHPSIQQ). A compositionally biased stretch (pro residues) spans 988 to 1001 (APPPSQPPRQPPQA). Residues 1045–1072 (PDELLSYLDPPDLPSNSNDDLLSLFENN) show a composition bias toward low complexity.

As to quaternary structure, interacts with AR, but not with ESR1, NR3C1, PGR, THRB nor VDR. Interacts with NOTCH1 and RBPJ. Interacts with SMARCA4. Interacts (via SP-RING-type domain) with SMAD3 and SMAD4 (via MH2 domain). As to expression, expressed in brain.

The protein localises to the nucleus. The protein resides in the nucleoplasm. It localises to the cytoplasm. Functionally, acts as a transcriptional coactivator. Increases ligand-dependent transcriptional activity of AR and promotes AR sumoylation. The stimulation of AR activity is dependent upon sumoylation. Also functions as a transcriptional coactivator in the TGF-beta signaling pathway by increasing the activity of the SMAD3/SMAD4 transcriptional complex. Involved in transcriptional activation of a subset of NOTCH1 target genes including MYC. Involved in thymocyte and T cell development. Involved in the regulation of postmitotic positioning of pyramidal neurons in the developing cerebral cortex. This chain is Zinc finger MIZ domain-containing protein 1 (Zmiz1), found in Mus musculus (Mouse).